The following is a 37-amino-acid chain: Serrulin (37 aa).

The interval 16-37 (FGGGGIGGGGFGGGYGGGKIKG) is disordered. Lysine 36 carries the post-translational modification Lysine amide.

Expressed in hemocytes (at protein level).

It localises to the secreted. Antimicrobial protein with activity against Gram-positive and Gram-negative bacteria, filamentous fungus, and yeast. Was tested against Micrococcus luteus A270 (MIC=0.5-1 uM), Echerichia coli SBS 363 (MIC=9-16 uM), Pseudomonas aeruginosa (MIC=0.01-0.3 uM), Aspergillus niger (MIC=3-6 uM), and Candida albicans MDM8 (MIC=1.5-3 uM). Has no hemolytic activity against human erythrocytes. This is Serrulin from Tityus serrulatus (Brazilian scorpion).